A 258-amino-acid polypeptide reads, in one-letter code: Sugar fermentation stimulation protein homolog (258 aa).

It belongs to the SfsA family.

The chain is Sugar fermentation stimulation protein homolog from Prochlorococcus marinus (strain NATL2A).